Reading from the N-terminus, the 650-residue chain is Acetyl-coenzyme A synthetase (650 aa).

CoA is bound by residues Arg191–Arg194, Thr311, and Asn335. Residues Gly387–Pro389, Asp411–Thr416, Asp500, and Arg515 each bind ATP. CoA is bound at residue Ser523. Arg526 contributes to the ATP binding site. The Mg(2+) site is built by Val537, His539, and Val542. Position 584 (Arg584) interacts with CoA. N6-acetyllysine is present on Lys609.

The protein belongs to the ATP-dependent AMP-binding enzyme family. Mg(2+) serves as cofactor. In terms of processing, acetylated. Deacetylation by the SIR2-homolog deacetylase activates the enzyme.

The catalysed reaction is acetate + ATP + CoA = acetyl-CoA + AMP + diphosphate. In terms of biological role, catalyzes the conversion of acetate into acetyl-CoA (AcCoA), an essential intermediate at the junction of anabolic and catabolic pathways. AcsA undergoes a two-step reaction. In the first half reaction, AcsA combines acetate with ATP to form acetyl-adenylate (AcAMP) intermediate. In the second half reaction, it can then transfer the acetyl group from AcAMP to the sulfhydryl group of CoA, forming the product AcCoA. This Shewanella halifaxensis (strain HAW-EB4) protein is Acetyl-coenzyme A synthetase.